Consider the following 220-residue polypeptide: Peptide methionine sulfoxide reductase MsrA (220 aa).

Cys54 is an active-site residue.

It belongs to the MsrA Met sulfoxide reductase family.

It catalyses the reaction L-methionyl-[protein] + [thioredoxin]-disulfide + H2O = L-methionyl-(S)-S-oxide-[protein] + [thioredoxin]-dithiol. The enzyme catalyses [thioredoxin]-disulfide + L-methionine + H2O = L-methionine (S)-S-oxide + [thioredoxin]-dithiol. Functionally, has an important function as a repair enzyme for proteins that have been inactivated by oxidation. Catalyzes the reversible oxidation-reduction of methionine sulfoxide in proteins to methionine. The chain is Peptide methionine sulfoxide reductase MsrA from Salinispora tropica (strain ATCC BAA-916 / DSM 44818 / JCM 13857 / NBRC 105044 / CNB-440).